The following is a 706-amino-acid chain: Integrator complex subunit 13 (706 aa).

The tract at residues 564 to 603 (PPEEEERKKRGRKREDKEDKSEKAVKDYEQEKSWQDSERL) is disordered. Residues 567–622 (EEERKKRGRKREDKEDKSEKAVKDYEQEKSWQDSERLKGILERGKEELAEAEIIKD) are a coiled coil. The Nuclear localization signal (NLS) motif lies at 572–582 (KRGRKREDKED). Lys-611 is covalently cross-linked (Glycyl lysine isopeptide (Lys-Gly) (interchain with G-Cter in SUMO2)). Residues 615–636 (AEAEIIKDSPDSPEPPNKKPLV) show a composition bias toward basic and acidic residues. A disordered region spans residues 615–650 (AEAEIIKDSPDSPEPPNKKPLVEMDETPQVEKSKGP). Phosphoserine occurs at positions 623, 626, and 678. A cleavage module binding motif (CMBM) region spans residues 649–694 (GPVSLLSLWSNRINTANSRKHQEFAGRLNSVNNRAELYQHLKEENG).

This sequence belongs to the Integrator subunit 13 family. As to quaternary structure, component of the Integrator complex, composed of core subunits INTS1, INTS2, INTS3, INTS4, INTS5, INTS6, INTS7, INTS8, INTS9/RC74, INTS10, INTS11/CPSF3L, INTS12, INTS13, INTS14 and INTS15. The core complex associates with protein phosphatase 2A subunits PPP2CA and PPP2R1A, to form the Integrator-PP2A (INTAC) complex. INTS13 is part of the tail subcomplex, composed of INTS10, INTS13, INTS14 and INTS15. Interacts with transcription factors ZNF609 and ZNF655. Interacts with PAFAH1B1; this interaction may be required for proper recruitment of dynein complexes to the nuclear envelope at prophase. As to expression, widely expressed. Tends to be up-regulated in seminomas compared to normal testis.

The protein localises to the nucleus. The protein resides in the cytoplasm. Its function is as follows. Component of the integrator complex, a multiprotein complex that terminates RNA polymerase II (Pol II) transcription in the promoter-proximal region of genes. The integrator complex provides a quality checkpoint during transcription elongation by driving premature transcription termination of transcripts that are unfavorably configured for transcriptional elongation: the complex terminates transcription by (1) catalyzing dephosphorylation of the C-terminal domain (CTD) of Pol II subunit POLR2A/RPB1 and SUPT5H/SPT5, (2) degrading the exiting nascent RNA transcript via endonuclease activity and (3) promoting the release of Pol II from bound DNA. The integrator complex is also involved in terminating the synthesis of non-coding Pol II transcripts, such as enhancer RNAs (eRNAs), small nuclear RNAs (snRNAs), telomerase RNAs and long non-coding RNAs (lncRNAs). Within the integrator complex, INTS13 is part of the integrator tail module and acts as a platform for the recruitment of transcription factors at promoters. At prophase, mediates recruitment of cytoplasmic dynein to the nuclear envelope, a step important for proper centrosome-nucleus coupling. At G2/M phase, may be required for proper spindle formation and execution of cytokinesis. The protein is Integrator complex subunit 13 of Homo sapiens (Human).